The primary structure comprises 239 residues: tRNA (guanine-N(1)-)-methyltransferase (239 aa).

Residues Gly108 and 127–132 (LGDYVL) each bind S-adenosyl-L-methionine.

It belongs to the RNA methyltransferase TrmD family. In terms of assembly, homodimer.

The protein resides in the cytoplasm. It catalyses the reaction guanosine(37) in tRNA + S-adenosyl-L-methionine = N(1)-methylguanosine(37) in tRNA + S-adenosyl-L-homocysteine + H(+). Functionally, specifically methylates guanosine-37 in various tRNAs. The sequence is that of tRNA (guanine-N(1)-)-methyltransferase from Streptococcus pneumoniae serotype 2 (strain D39 / NCTC 7466).